A 703-amino-acid chain; its full sequence is NADH-quinone oxidoreductase chain 12 (703 aa).

The next 16 helical transmembrane spans lie at 4–24, 30–50, 79–99, 116–136, 138–158, 179–199, 224–244, 256–276, 290–310, 325–345, 346–366, 381–401, 415–435, 475–495, 580–600, and 679–699; these read FVLFAPLIASLIAGLGWRAIG, YLTTGVLFLSCLISWYLFLSF, LTAIMLIVVTTVSALVHMYSL, ARFFAYLSFFTFAMLMLVTAD, LLQMFFGWEGVGVASYLLIGF, GDFGFLLGIFGIYWLTGSVQF, ANLLGFLLFVGAMGKSAQLLL, TPVSALIHAATMVTAGVFLVC, NFIVIIGATTAFFAATVGLVQ, LGYMFVAAGVGVYSAAMFHLL, THAFFKAMLFLGAGSVIHAMH, IPLTFWAMMIGTFAITGVGIP, AIIESAYAGSGYAFWLLVIAA, LGVLAIGAVFAGMVWYGPFFG, VSPFVAMVLGLITAWTFYIAN, and LFHYAFAMVLGIVGLLIWVMM.

Belongs to the complex I subunit 5 family. As to quaternary structure, NDH-1 is composed of at least 14 different subunits, Nqo1 to Nqo14. The complex has a L-shaped structure, with the hydrophobic arm (subunits Nqo7, Nqo8, Nqo10 to Nqo14) embedded in the inner membrane and the hydrophilic peripheral arm (subunits Nqo1 to Nqo6, Nqo9) protruding into the bacterial cytoplasm. The hydrophilic domain contains all the redox centers.

Its subcellular location is the cell inner membrane. The enzyme catalyses a quinone + NADH + 5 H(+)(in) = a quinol + NAD(+) + 4 H(+)(out). In terms of biological role, NDH-1 shuttles electrons from NADH, via FMN and iron-sulfur (Fe-S) centers, to quinones in the respiratory chain. The immediate electron acceptor for the enzyme in this species is believed to be ubiquinone. Couples the redox reaction to proton translocation (for every two electrons transferred, four hydrogen ions are translocated across the cytoplasmic membrane), and thus conserves the redox energy in a proton gradient. The polypeptide is NADH-quinone oxidoreductase chain 12 (Paracoccus denitrificans).